We begin with the raw amino-acid sequence, 943 residues long: Isoleucine--tRNA ligase (943 aa).

The 'HIGH' region motif lies at 59-69 (PYANGRIHLGH). Glutamate 577 contributes to the L-isoleucyl-5'-AMP binding site. The 'KMSKS' region signature appears at 618-622 (KMSKS). Lysine 621 is a binding site for ATP. Zn(2+)-binding residues include cysteine 906, cysteine 909, cysteine 926, and cysteine 929.

The protein belongs to the class-I aminoacyl-tRNA synthetase family. IleS type 1 subfamily. Monomer. Requires Zn(2+) as cofactor.

The protein resides in the cytoplasm. It catalyses the reaction tRNA(Ile) + L-isoleucine + ATP = L-isoleucyl-tRNA(Ile) + AMP + diphosphate. Functionally, catalyzes the attachment of isoleucine to tRNA(Ile). As IleRS can inadvertently accommodate and process structurally similar amino acids such as valine, to avoid such errors it has two additional distinct tRNA(Ile)-dependent editing activities. One activity is designated as 'pretransfer' editing and involves the hydrolysis of activated Val-AMP. The other activity is designated 'posttransfer' editing and involves deacylation of mischarged Val-tRNA(Ile). In Stenotrophomonas maltophilia (strain K279a), this protein is Isoleucine--tRNA ligase.